Consider the following 495-residue polypeptide: Two-component response regulator-like APRR3 (495 aa).

Residues 65 to 183 form the Response regulatory domain; the sequence is KVLLVENDDS…ELKNLWQHVW (119 aa). Disordered stretches follow at residues 188 to 441 and 465 to 495; these read SSSG…RWAQ and HSRK…SEDN. Residues 206–217 show a composition bias toward polar residues; it reads PESTQGSENDAS. The span at 231 to 248 shows a compositional bias: low complexity; sequence GLSNQDGGSDNGSGTQSS. The segment covering 256–265 has biased composition (polar residues); the sequence is TKSTSPSNQF. Residues 284-293 show a composition bias toward basic and acidic residues; it reads RLKEAEDQKE. Positions 294-304 are enriched in polar residues; the sequence is QIGTGSQTGMS. Residues 307–319 are compositionally biased toward basic and acidic residues; that stretch reads KKAEEPGDLEKNA. Polar residues predominate over residues 335 to 350; it reads NRSSGNSQVESKAPSS. Residues 349-372 adopt a coiled-coil conformation; the sequence is SSNREDLQSLEQTLKKTREDRDYK. A compositionally biased stretch (basic and acidic residues) spans 351-378; sequence NREDLQSLEQTLKKTREDRDYKVGDRSV. Composition is skewed to polar residues over residues 380-395 and 420-436; these read RHSN…NGAT and GSSS…SSGS. A CCT domain is found at 442–484; it reads REAALMKFRLKRKERCFEKKVRYHSRKKLAEQRPHVKGQFIRK. The segment covering 483–495 has biased composition (basic and acidic residues); that stretch reads RKRDDHKSGSEDN.

The protein belongs to the ARR-like family. Interacts with APRR1/TOC1 (via N-terminus). Post-translationally, phosphorylated by WNK1; during the night. Phosphorylation is required for optimal interaction with APRR1/TOC1.

Its subcellular location is the nucleus. Its function is as follows. Controls photoperiodic flowering response. Component of the circadian clock. Controls the degradation of APRR1/TOC1 by the SCF(ZTL) complex. Expression of several members of the ARR-like family is controlled by circadian rhythm. The particular coordinated sequential expression of APRR9, APRR7, APRR5, APRR3 and APPR1 result to circadian waves that may be at the basis of the endogenous circadian clock. This Arabidopsis thaliana (Mouse-ear cress) protein is Two-component response regulator-like APRR3 (APRR3).